The sequence spans 156 residues: Small ribosomal subunit protein uS7 (156 aa).

The protein belongs to the universal ribosomal protein uS7 family. In terms of assembly, part of the 30S ribosomal subunit. Contacts proteins S9 and S11.

Its function is as follows. One of the primary rRNA binding proteins, it binds directly to 16S rRNA where it nucleates assembly of the head domain of the 30S subunit. Is located at the subunit interface close to the decoding center, probably blocks exit of the E-site tRNA. The protein is Small ribosomal subunit protein uS7 of Desulfosudis oleivorans (strain DSM 6200 / JCM 39069 / Hxd3) (Desulfococcus oleovorans).